We begin with the raw amino-acid sequence, 310 residues long: ADP-L-glycero-D-manno-heptose-6-epimerase (310 aa).

NADP(+) is bound by residues 10–11 (FI), 31–32 (DN), Lys38, Lys53, 75–79 (EGACS), and Asn92. Tyr140 functions as the Proton acceptor in the catalytic mechanism. Lys144 is a binding site for NADP(+). Asn169 serves as a coordination point for substrate. NADP(+) contacts are provided by Val170 and Lys178. The active-site Proton acceptor is Lys178. Substrate-binding positions include Ser180, His187, 201–204 (FAGS), Arg209, and Tyr272.

This sequence belongs to the NAD(P)-dependent epimerase/dehydratase family. HldD subfamily. In terms of assembly, homopentamer. The cofactor is NADP(+).

The catalysed reaction is ADP-D-glycero-beta-D-manno-heptose = ADP-L-glycero-beta-D-manno-heptose. Its pathway is nucleotide-sugar biosynthesis; ADP-L-glycero-beta-D-manno-heptose biosynthesis; ADP-L-glycero-beta-D-manno-heptose from D-glycero-beta-D-manno-heptose 7-phosphate: step 4/4. In terms of biological role, catalyzes the interconversion between ADP-D-glycero-beta-D-manno-heptose and ADP-L-glycero-beta-D-manno-heptose via an epimerization at carbon 6 of the heptose. In Yersinia pseudotuberculosis serotype O:1b (strain IP 31758), this protein is ADP-L-glycero-D-manno-heptose-6-epimerase.